Reading from the N-terminus, the 567-residue chain is Beta-galactoside-specific lectin 2 (567 aa).

The first 33 residues, 1 to 33, serve as a signal peptide directing secretion; that stretch reads MNARLASSRAWVWCFLMVGLVCGATAKAESKIN. Residue Asn145 is glycosylated (N-linked (GlcNAc...) asparagine). Residue Glu198 is part of the active site. Intrachain disulfides connect Cys280/Cys306 and Cys322/Cys341. The propeptide at 288 to 301 is connecting peptide; sequence DVHNWPLVIRPVMV. In terms of domain architecture, Ricin B-type lectin 1 spans 309–439; it reads SEPTVRIVGR…DSLGQSWLAS (131 aa). D-galactose is bound at residue 324 to 326; that stretch reads DVR. A glycan (N-linked (GlcNAc...) asparagine) is linked at Asn362. A disulfide bridge connects residues Cys365 and Cys382. N-linked (GlcNAc...) asparagine glycosylation occurs at Asn440. In terms of domain architecture, Ricin B-type lectin 2 spans 443–566; sequence APREVTIYGF…GNPNQMWLPV (124 aa). Disulfide bonds link Cys456/Cys469 and Cys495/Cys512. 539–541 is a D-galactose binding site; sequence DVR.

It belongs to the ribosome-inactivating protein family. Type 2 RIP subfamily. In terms of assembly, disulfide-linked dimer of A and B chains.

The catalysed reaction is Endohydrolysis of the N-glycosidic bond at one specific adenosine on the 28S rRNA.. Functionally, the A chain is responsible for inhibiting protein synthesis through the catalytic inactivation of 60S ribosomal subunits by removing adenine from position 4,324 of 28S rRNA. The B chain binds to cell receptors and probably facilitates the entry into the cell of the A chain; B chains are also responsible for cell agglutination (lectin activity). This chain is Beta-galactoside-specific lectin 2, found in Viscum album (European mistletoe).